The following is a 581-amino-acid chain: Probable peptidoglycan D,D-transpeptidase PenA (581 aa).

A helical transmembrane segment spans residues 28 to 48 (ISFVLMAMAVLFACLIARGLY). Serine 310 acts as the Acyl-ester intermediate in catalysis.

Belongs to the transpeptidase family. FtsI subfamily.

It localises to the cell inner membrane. The enzyme catalyses Preferential cleavage: (Ac)2-L-Lys-D-Ala-|-D-Ala. Also transpeptidation of peptidyl-alanyl moieties that are N-acyl substituents of D-alanine.. It participates in cell wall biogenesis; peptidoglycan biosynthesis. Catalyzes cross-linking of the peptidoglycan cell wall at the division septum. The polypeptide is Probable peptidoglycan D,D-transpeptidase PenA (Neisseria gonorrhoeae).